The following is a 146-amino-acid chain: Hemoglobin subunit beta (146 aa).

The 145-residue stretch at 2–146 (QWTAEEKQLI…VAHALARKYH (145 aa)) folds into the Globin domain. Heme b-binding residues include His-63 and His-92.

This sequence belongs to the globin family. As to quaternary structure, heterotetramer of two alpha chains and two beta chains. As to expression, red blood cells.

Its function is as follows. Involved in oxygen transport from the lung to the various peripheral tissues. This is Hemoglobin subunit beta (HBB) from Sturnus vulgaris (Starling).